A 313-amino-acid chain; its full sequence is tRNA dimethylallyltransferase (313 aa).

An ATP-binding site is contributed by 11-18; the sequence is GPTAGGKT. 13 to 18 provides a ligand contact to substrate; sequence TAGGKT. 3 interaction with substrate tRNA regions span residues 36 to 39, 160 to 164, and 243 to 248; these read DSAL, QRIGR, and RCVGYR.

The protein belongs to the IPP transferase family. In terms of assembly, monomer. Mg(2+) serves as cofactor.

The enzyme catalyses adenosine(37) in tRNA + dimethylallyl diphosphate = N(6)-dimethylallyladenosine(37) in tRNA + diphosphate. Functionally, catalyzes the transfer of a dimethylallyl group onto the adenine at position 37 in tRNAs that read codons beginning with uridine, leading to the formation of N6-(dimethylallyl)adenosine (i(6)A). The protein is tRNA dimethylallyltransferase of Neisseria meningitidis serogroup B (strain ATCC BAA-335 / MC58).